Here is a 441-residue protein sequence, read N- to C-terminus: Ribosomal protein uS12 methylthiotransferase RimO (441 aa).

Residues 8-118 (PKIGFVSLGC…VLQHVHHYVP (111 aa)) enclose the MTTase N-terminal domain. Residues Cys-17, Cys-53, Cys-82, Cys-150, Cys-154, and Cys-157 each contribute to the [4Fe-4S] cluster site. The region spanning 136 to 373 (LTPRHYAYLK…MQLQQQISAE (238 aa)) is the Radical SAM core domain. The TRAM domain maps to 376–441 (QEKVGREILV…DEYDLWGSRV (66 aa)).

It belongs to the methylthiotransferase family. RimO subfamily. [4Fe-4S] cluster serves as cofactor.

It localises to the cytoplasm. It carries out the reaction L-aspartate(89)-[ribosomal protein uS12]-hydrogen + (sulfur carrier)-SH + AH2 + 2 S-adenosyl-L-methionine = 3-methylsulfanyl-L-aspartate(89)-[ribosomal protein uS12]-hydrogen + (sulfur carrier)-H + 5'-deoxyadenosine + L-methionine + A + S-adenosyl-L-homocysteine + 2 H(+). Catalyzes the methylthiolation of an aspartic acid residue of ribosomal protein uS12. The sequence is that of Ribosomal protein uS12 methylthiotransferase RimO from Salmonella arizonae (strain ATCC BAA-731 / CDC346-86 / RSK2980).